A 57-amino-acid polypeptide reads, in one-letter code: Large ribosomal subunit protein bL32 (57 aa).

Positions 1–23 (MAVPARHTSSAKKNRRRTHYKLT) are disordered. Residues 9-20 (SSAKKNRRRTHY) are compositionally biased toward basic residues.

Belongs to the bacterial ribosomal protein bL32 family.

This chain is Large ribosomal subunit protein bL32, found in Lactococcus lactis subsp. cremoris (strain MG1363).